Here is a 377-residue protein sequence, read N- to C-terminus: Prostaglandin reductase-3 (377 aa).

Lys-35 is modified (N6-acetyllysine). NADP(+)-binding residues include Thr-185, Ser-205, Lys-209, Tyr-224, Ser-247, Ile-269, and Tyr-275. Ser-299 is subject to Phosphoserine. NADP(+)-binding positions include 303–305 (FFL) and Asn-361.

This sequence belongs to the zinc-containing alcohol dehydrogenase family. Quinone oxidoreductase subfamily.

It is found in the peroxisome. The catalysed reaction is 13,14-dihydro-15-oxo-prostaglandin E2 + NADP(+) = 15-oxoprostaglandin E2 + NADPH + H(+). It catalyses the reaction 13,14-dihydro-15-oxo-prostaglandin E1 + NADP(+) = 15-oxoprostaglandin E1 + NADPH + H(+). It carries out the reaction 13,14-dihydro-15-oxo-PGF2alpha + NADP(+) = 15-oxoprostaglandin F2alpha + NADPH + H(+). The enzyme catalyses 13,14-dihydro-15-oxo-prostaglandin F1alpha + NADP(+) = 15-oxoprostaglandin F1alpha + NADPH + H(+). Functionally, functions as 15-oxo-prostaglandin 13-reductase and acts on 15-keto-PGE1, 15-keto-PGE2, 15-keto-PGE1-alpha and 15-keto-PGE2-alpha with highest efficiency towards 15-keto-PGE2-alpha. Overexpression represses transcriptional activity of PPARG and inhibits adipocyte differentiation. This is Prostaglandin reductase-3 (PTGR3) from Bos taurus (Bovine).